The chain runs to 340 residues: GTPase Obg (340 aa).

The 158-residue stretch at 1–158 folds into the Obg domain; that stretch reads MSFIDEAKVY…KYITLKLKII (158 aa). Residues 159-325 enclose the OBG-type G domain; the sequence is SDIGIIGLPN…LSTLIQYIHK (167 aa). Residues 165-172, 190-194, 211-214, 278-281, and 306-308 each bind GTP; these read GLPNAGKS, FTTLE, DIPG, NKSD, and SSI. Mg(2+)-binding residues include Ser172 and Thr192.

It belongs to the TRAFAC class OBG-HflX-like GTPase superfamily. OBG GTPase family. Monomer. It depends on Mg(2+) as a cofactor.

The protein resides in the cytoplasm. An essential GTPase which binds GTP, GDP and possibly (p)ppGpp with moderate affinity, with high nucleotide exchange rates and a fairly low GTP hydrolysis rate. Plays a role in control of the cell cycle, stress response, ribosome biogenesis and in those bacteria that undergo differentiation, in morphogenesis control. The chain is GTPase Obg from Ehrlichia chaffeensis (strain ATCC CRL-10679 / Arkansas).